Consider the following 434-residue polypeptide: Methylenetetrahydrofolate--tRNA-(uracil-5-)-methyltransferase TrmFO (434 aa).

An FAD-binding site is contributed by 9–14 (GGGLAG).

Belongs to the MnmG family. TrmFO subfamily. The cofactor is FAD.

Its subcellular location is the cytoplasm. It carries out the reaction uridine(54) in tRNA + (6R)-5,10-methylene-5,6,7,8-tetrahydrofolate + NADH + H(+) = 5-methyluridine(54) in tRNA + (6S)-5,6,7,8-tetrahydrofolate + NAD(+). The catalysed reaction is uridine(54) in tRNA + (6R)-5,10-methylene-5,6,7,8-tetrahydrofolate + NADPH + H(+) = 5-methyluridine(54) in tRNA + (6S)-5,6,7,8-tetrahydrofolate + NADP(+). Catalyzes the folate-dependent formation of 5-methyl-uridine at position 54 (M-5-U54) in all tRNAs. The protein is Methylenetetrahydrofolate--tRNA-(uracil-5-)-methyltransferase TrmFO of Geobacter sulfurreducens (strain ATCC 51573 / DSM 12127 / PCA).